A 514-amino-acid polypeptide reads, in one-letter code: Voltage-gated potassium channel regulatory subunit KCNG1 (514 aa).

The Cytoplasmic portion of the chain corresponds to 1 to 224; sequence MTLLPGDNSD…DMVEKPHSGL (224 aa). Over residues 181–196 the composition is skewed to acidic residues; the sequence is EREDEEEALDSEDQES. A disordered region spans residues 181-205; sequence EREDEEEALDSEDQESEGPSTSEGR. The chain crosses the membrane as a helical span at residues 225 to 246; the sequence is PGKVFACLSVLFVTVTAVNLSV. The Extracellular segment spans residues 247–267; sequence STLPSLREEEEQGQCSQMCHN. A helical membrane pass occupies residues 268–289; that stretch reads VFIVESVCVGWFSLEFLLRFIQ. Over 290–300 the chain is Cytoplasmic; that stretch reads APSKFAFLRSP. A helical transmembrane segment spans residues 301-321; sequence LTLIDLVAILPYYVTLLVDGA. The Extracellular portion of the chain corresponds to 322–338; sequence ASSRRKPSTGNSYLDKV. Residues 339-359 form a helical; Voltage-sensor membrane-spanning segment; that stretch reads GLVLRVLRALRILYVMRLARH. Over 360-374 the chain is Cytoplasmic; that stretch reads SLGLQTLGLTARRCT. A helical membrane pass occupies residues 375 to 396; the sequence is REFGLLLLFLCVAIALFAPLLY. The Extracellular segment spans residues 397–411; it reads VIENEMADSPEFTSI. An intramembrane region (helical) is located at residues 412–423; it reads PACYWWAVITMT. The Selectivity filter motif lies at 424–429; that stretch reads TVGYGD. An intramembrane segment occupies 424-431; it reads TVGYGDMV. Residues 432–438 lie on the Extracellular side of the membrane; sequence PRSTPGQ. A helical membrane pass occupies residues 439–467; sequence VVALSSILSGILLMAFPVTSIFHTFSRSY. The Cytoplasmic portion of the chain corresponds to 468 to 514; that stretch reads LELKQEQERVLIRRAQYLIKTKSQLSGMSQDSDILFGSASSDTRDNN.

It belongs to the potassium channel family. G (TC 1.A.1.2) subfamily. Kv6.1/KCNG1 sub-subfamily. Heterotetramer with KCNB1 or KCNB2.

The protein resides in the cell membrane. Regulatory alpha-subunit of the voltage-gated potassium (Kv) channel which, when coassembled with KCNB1 or KCNB2, can modulate their expression and their gating kinetics by acting on deactivation upon repolarization and inactivation during maintained depolarization. Potassium channel subunit that does not form functional channels by itself. This is Voltage-gated potassium channel regulatory subunit KCNG1 from Rattus norvegicus (Rat).